A 133-amino-acid chain; its full sequence is Small ribosomal subunit protein bS6 (133 aa).

Basic and acidic residues predominate over residues 106 to 125 (REERVERAPRAPRPEVKAEP). Positions 106-133 (REERVERAPRAPRPEVKAEPEAEATAEA) are disordered.

It belongs to the bacterial ribosomal protein bS6 family.

Its function is as follows. Binds together with bS18 to 16S ribosomal RNA. The protein is Small ribosomal subunit protein bS6 of Psychromonas ingrahamii (strain DSM 17664 / CCUG 51855 / 37).